The sequence spans 458 residues: MPMLMATRIDIIQKLNVYPRFQNHDKKKLITLSNLDRQCPLLMYSVFFYKNTTTRDFDSVFSNLKLGLEETMSVWYPAAGRLGLDGGGCKLNIRCNDGGAVMVEAVATGVKLSELGDLTQYNEFYENLVYKPSLDGDFSVMPLVVAQVTRFACGGYSIGIGTSHSLFDGISAYEFIHAWASNSHIHNKSNSKITNKKEDVVIKPVHDRRNLLVNRDAVRETNAAAICHLYQLIKQAMMTYQEQNRNLELPDSGFVIKTFELNGDAIESMKKKSLEGFMCSSFEFLAAHLWKARTRALGLRRDAMVCLQFAVDIRKRTETPLPEGFSGNAYVLASVASTARELLEELTLESIVNKIREAKKSIDQGYINSYMEALGGSNDGNLPPLKELTLISDWTKMPFHNVGFGNGGEPADYMAPLCPPVPQVAYFMKNPKDAKGVLVRIGLDPRDVNGFSNHFLDC.

The active-site Proton acceptor is His164.

This sequence belongs to the plant acyltransferase family. As to expression, highly expressed in young tissues and vascular bundles. Mostly expressed in young leaves, primary roots, flowers (including petals and sepals), and siliques.

It localises to the endoplasmic reticulum. Its subcellular location is the nucleus. The protein operates within plant hormone biosynthesis; brassinosteroid biosynthesis. Its function is as follows. Brassinosteroids (BR) acyltransferase with acyl-CoA ligase activity toward brassinolide (BL), castasterone (CS), typhasterol (TY), 6-deoxotyphasterol (6-deoxoTY), and 6-deoxocastasterone (6-deoxoCS) and thus converts them to corresponding lauroyl esters. Regulates BR homeostasis and promotes BR-mediated cell growth regulation. Involved in vascular bundle development. The sequence is that of Brassinosteroid-related acyltransferase 1 from Arabidopsis thaliana (Mouse-ear cress).